A 382-amino-acid polypeptide reads, in one-letter code: MSNATNNTLGSLLPQLEAAANSNSLYGGMVPNLRFNITMIVIWGILLTIHVVQLLMRQYWFSIAFICTGILEVLGFIGRTWSHSNVADMDAFLLNMICLTIAPVFTMGGIYYQLAKLIEVYGHRFSLLPSPMAYSFIFICSDIVSLVVQAVGGGLCGVAVTDGTSTTTGNHVFIAGLAIQVASMAIFLMLWFHFLFRIYISVRWEHINSRPISLSLLKISQTEVDYLYREKFHFLRLEPKRWVFHYFNLAITVAVLTIFTRCCYRLAELVVGWDGYLITHEWYFIILDALMMAIATVTLTIFHPGFAFKGRSTSIPITPGHVDPETLPHTDDVEDILDTSDSKQFDIEKEEFQASMKYPISTFKQFMSKIANLFSSKKKAKL.

The Extracellular portion of the chain corresponds to 1 to 34; the sequence is MSNATNNTLGSLLPQLEAAANSNSLYGGMVPNLR. 2 N-linked (GlcNAc...) asparagine glycosylation sites follow: Asn-3 and Asn-6. Residues 35-55 traverse the membrane as a helical segment; it reads FNITMIVIWGILLTIHVVQLL. Topologically, residues 56-57 are cytoplasmic; it reads MR. Residues 58–78 form a helical membrane-spanning segment; sequence QYWFSIAFICTGILEVLGFIG. Topologically, residues 79–90 are extracellular; that stretch reads RTWSHSNVADMD. Residues 91–111 traverse the membrane as a helical segment; that stretch reads AFLLNMICLTIAPVFTMGGIY. Residues 112–135 are Cytoplasmic-facing; the sequence is YQLAKLIEVYGHRFSLLPSPMAYS. A helical membrane pass occupies residues 136–156; sequence FIFICSDIVSLVVQAVGGGLC. Over 157–171 the chain is Extracellular; the sequence is GVAVTDGTSTTTGNH. A helical transmembrane segment spans residues 172 to 192; it reads VFIAGLAIQVASMAIFLMLWF. Residues 193–241 are Cytoplasmic-facing; sequence HFLFRIYISVRWEHINSRPISLSLLKISQTEVDYLYREKFHFLRLEPKR. The helical transmembrane segment at 242-262 threads the bilayer; the sequence is WVFHYFNLAITVAVLTIFTRC. The Extracellular segment spans residues 263-281; sequence CYRLAELVVGWDGYLITHE. Residues 282-302 form a helical membrane-spanning segment; that stretch reads WYFIILDALMMAIATVTLTIF. The Cytoplasmic segment spans residues 303 to 382; sequence HPGFAFKGRS…LFSSKKKAKL (80 aa).

The protein belongs to the lipid-translocating exporter (LTE) (TC 9.A.26.1) family.

It is found in the cell membrane. Its function is as follows. Catalyzes the ATP-dependent translocation of sphingoid long-chain bases (LCBs) from the cytoplasmic site toward the extracytoplasmic side of the membrane (flip-flop). Involved in the establishment of the functional lipid asymmetry of the plasma membrane. Regulates intracellular levels of LCBs, sphingolipid precursors that are growth inhibitory at increased levels. This chain is Sphingoid long-chain base transporter RSB1 (RSB1), found in Saccharomyces cerevisiae (strain ATCC 204508 / S288c) (Baker's yeast).